A 407-amino-acid chain; its full sequence is MNNSGADEIGKLFVGGLDWSTTQETLRSYFSQYGEVVDCVIMKDKTTNQSRGFGFVKFKDPNCVGTVLASRPHTLDGRNIDPKPCTPRGMQPERTRPKEGWQKGPRSDNSKSNKIFVGGIPHNCGETELREYFKKFGVVTEVVMIYDAEKQRPRGFGFITFEDEQSVDQAVNMHFHDIMGKKVEVKRAEPRDSKSQAPGQPGASQWGSRVVPNAANGWAGQPPPTWQQGYGPQGMWVPAGQAIGGYGPPPAGRGAPPPPPPFTSYIVSTPPGGFPPPQGFPQGYGAPPQFSFGYGPPPPPPDQFAPPGVPPPPATPGAAPLAFPPPPSQAAPDMSKPPTAQPDFPYGQYAGYGQDLSGFGQGFSDPSQQPPSYGGPSVPGSGGPPAGGSGFGRGQNHNVQGFHPYRR.

Met-1 bears the N-acetylmethionine mark. RRM domains follow at residues 10–97 (GKLF…RTRP) and 113–190 (NKIF…RAEP). The interval 74–117 (TLDGRNIDPKPCTPRGMQPERTRPKEGWQKGPRSDNSKSNKIFV) is disordered. Residues 91-111 (QPERTRPKEGWQKGPRSDNSK) show a composition bias toward basic and acidic residues. Residue Lys-150 is modified to N6-acetyllysine. Residues 185 to 194 (VKRAEPRDSK) are compositionally biased toward basic and acidic residues. Positions 185–407 (VKRAEPRDSK…NVQGFHPYRR (223 aa)) are disordered. The span at 195–207 (SQAPGQPGASQWG) shows a compositional bias: polar residues. Residues 247 to 262 (GPPPAGRGAPPPPPPF) show a composition bias toward pro residues. Omega-N-methylarginine is present on Arg-253. A compositionally biased stretch (low complexity) spans 280–294 (FPQGYGAPPQFSFGY). Residues 295–315 (GPPPPPPDQFAPPGVPPPPAT) are compositionally biased toward pro residues. Positions 364–379 (SDPSQQPPSYGGPSVP) are enriched in low complexity. Residues 380–393 (GSGGPPAGGSGFGR) show a composition bias toward gly residues.

Interacts with DAZ and DAZL. Acetylation at Lys-150 is predominantly observed in the nuclear fraction, and may regulate nucleocytoplasmic transport. As to expression, mainly expressed in testis. Expressed to a lower level in thymus. Weakly or not expressed in heart, liver, brain, placenta, lung, skeletal muscle, kidney and pancreas.

The protein localises to the cytoplasm. It is found in the nucleus. In terms of biological role, RNA-binding protein, which may be required during spermatogenesis. This is DAZ-associated protein 1 (DAZAP1) from Homo sapiens (Human).